A 138-amino-acid chain; its full sequence is MRTLWIVAVCLIGVEGNLFQFGDMILQKTGKEAVHSYAIYGCYCGWGGQGRAQDATDRCCFAQDCCYGRVNDCNPKMATYTYSFENGDIVCGDNDLCLRAVCECDRAAAICLGENVNTYDKNYEYYSISHCTEESEQC.

A signal peptide spans Met-1–Gly-16. Cystine bridges form between Cys-42/Cys-131, Cys-44/Cys-60, Cys-59/Cys-111, Cys-65/Cys-138, Cys-66/Cys-104, Cys-73/Cys-97, and Cys-91/Cys-102.

The protein belongs to the phospholipase A2 family. Group II subfamily. D49 sub-subfamily. Heterodimer of a toxic basic protein having phospholipase A2 activity (B chain (AC Q8JFG0)) and a non-toxic acidic protein functioning as its inhibitor (A chain). In terms of tissue distribution, expressed by the venom gland.

The protein resides in the secreted. Heterodimer: postsynaptic neurotoxin. Functionally, monomer: the acidic chain inhibits the basic phospholipase A2 of the complex. This is Acidic phospholipase A2 inhibitor vaspin A chain from Vipera aspis aspis (Aspic viper).